Reading from the N-terminus, the 528-residue chain is O-methylsterigmatocystin oxidoreductase (528 aa).

Cysteine 440 serves as a coordination point for heme.

This sequence belongs to the cytochrome P450 family. Requires heme as cofactor.

It carries out the reaction 8-O-methylsterigmatocystin + 2 reduced [NADPH--hemoprotein reductase] + 2 O2 = aflatoxin B1 + methanol + 2 oxidized [NADPH--hemoprotein reductase] + CO2 + H2O + 2 H(+). The enzyme catalyses 8-O-methyldihydrosterigmatocystin + 2 reduced [NADPH--hemoprotein reductase] + 2 O2 = aflatoxin B2 + methanol + 2 oxidized [NADPH--hemoprotein reductase] + CO2 + H2O + 2 H(+). It functions in the pathway mycotoxin biosynthesis; aflatoxin biosynthesis. In terms of biological role, converts O-methylsterigmatocystin (OMST) to aflatoxin B1 and converts dihydro-O-methylsterigmatocystin (DHOMST) to aflatoxin B2 in the aflatoxin biosynthesis pathway. This chain is O-methylsterigmatocystin oxidoreductase (ordA), found in Aspergillus flavus.